Reading from the N-terminus, the 492-residue chain is MVDVPRLMSTQHPDNATLPFFTAGDVIEGEDEIQEAYYVYSHLGCDEQMWDFEGKEGDEYAVKKLLSRYDEFFADHQLGTDVRLTVRGPNPDVEGSEAKILLEILESIPRSFDAARRFAGEYGLETTAPIFEVIVPMVTDADQLNAVHEYYERFVTGKADEAVWDGRTVEEWVGEFDPASITVIPLIEEREAMLAADDIVREYATAHDQDAVRVFLARSDPALNYGCLAADLINKVALQRLYEMSEATGVDVHPILGAGSAPFRGNLTPERAAATADAYSEVETFTVQSAFKYDYPVETVRDGVATLRDADLGAPPFPIDEARALAVIDRTADAYADQVDAIAGTVNRLSSYVPDRRARKLHVGLFGYAREVGENALPRAIGYTASLYAVGCPPTLLGAHALTDDDAAFVREAFPAYFDHLADAARYFNPRCTDVLDLDDDTLAAAVERVDVTPNSEHRAATDDAIDALQRGDDDALRSAIRRGARERQFLG.

It belongs to the PEPCase type 2 family. As to quaternary structure, homotetramer. Requires Mg(2+) as cofactor.

It carries out the reaction oxaloacetate + phosphate = phosphoenolpyruvate + hydrogencarbonate. Catalyzes the irreversible beta-carboxylation of phosphoenolpyruvate (PEP) to form oxaloacetate (OAA), a four-carbon dicarboxylic acid source for the tricarboxylic acid cycle. This is Phosphoenolpyruvate carboxylase from Halobacterium salinarum (strain ATCC 29341 / DSM 671 / R1).